Reading from the N-terminus, the 329-residue chain is Phenylalanine--tRNA ligase alpha subunit (329 aa).

Residue E254 participates in Mg(2+) binding.

This sequence belongs to the class-II aminoacyl-tRNA synthetase family. Phe-tRNA synthetase alpha subunit type 1 subfamily. Tetramer of two alpha and two beta subunits. Mg(2+) serves as cofactor.

It localises to the cytoplasm. It carries out the reaction tRNA(Phe) + L-phenylalanine + ATP = L-phenylalanyl-tRNA(Phe) + AMP + diphosphate + H(+). This chain is Phenylalanine--tRNA ligase alpha subunit, found in Actinobacillus succinogenes (strain ATCC 55618 / DSM 22257 / CCUG 43843 / 130Z).